The following is a 422-amino-acid chain: 3-phosphoshikimate 1-carboxyvinyltransferase (422 aa).

3-phosphoshikimate is bound by residues Lys20, Ser21, and Arg25. Position 20 (Lys20) interacts with phosphoenolpyruvate. Gly91 and Arg119 together coordinate phosphoenolpyruvate. Positions 163, 164, 165, 305, 328, and 332 each coordinate 3-phosphoshikimate. Gln165 serves as a coordination point for phosphoenolpyruvate. The Proton acceptor role is filled by Asp305. Phosphoenolpyruvate contacts are provided by Arg336 and Arg377.

It belongs to the EPSP synthase family. Monomer.

Its subcellular location is the cytoplasm. The catalysed reaction is 3-phosphoshikimate + phosphoenolpyruvate = 5-O-(1-carboxyvinyl)-3-phosphoshikimate + phosphate. It participates in metabolic intermediate biosynthesis; chorismate biosynthesis; chorismate from D-erythrose 4-phosphate and phosphoenolpyruvate: step 6/7. Its function is as follows. Catalyzes the transfer of the enolpyruvyl moiety of phosphoenolpyruvate (PEP) to the 5-hydroxyl of shikimate-3-phosphate (S3P) to produce enolpyruvyl shikimate-3-phosphate and inorganic phosphate. In Ruminiclostridium cellulolyticum (strain ATCC 35319 / DSM 5812 / JCM 6584 / H10) (Clostridium cellulolyticum), this protein is 3-phosphoshikimate 1-carboxyvinyltransferase.